Here is a 309-residue protein sequence, read N- to C-terminus: GTP cyclohydrolase MptA (309 aa).

Belongs to the GTP cyclohydrolase IV family. In terms of assembly, homodimer. It depends on Fe(2+) as a cofactor.

The enzyme catalyses GTP + H2O = 7,8-dihydroneopterin 2',3'-cyclic phosphate + formate + diphosphate + H(+). It functions in the pathway cofactor biosynthesis; 5,6,7,8-tetrahydromethanopterin biosynthesis. In terms of biological role, converts GTP to 7,8-dihydro-D-neopterin 2',3'-cyclic phosphate, the first intermediate in the biosynthesis of coenzyme methanopterin. This Haloquadratum walsbyi (strain DSM 16790 / HBSQ001) protein is GTP cyclohydrolase MptA.